Reading from the N-terminus, the 458-residue chain is MTKEMTENQRLCPHEQEDADCSSESVKFDARSMTASLPHSTKNGPSLQEKLKSFKAALIALYLLVFAVLIPVVGIVTAQLLNWEMKNCLVCSLNTSDTSQGPMEKENTSKVEMRFTIIMEHMKDMEERIESISNSKADLIDTERFQNFSMATDQRLNDILLQLNSLISSVQEHGNSLDAISKSLQSLNMTLLDVQLHTETLNVRVRESTAKQQEDISKLEERVYKVSAEVQSVKEEQAHVEQEVKQEVRVLNNITNDLRLKDWEHSQTLKNITFIQGPPGPQGEKGDRGLTGQTGPPGAPGIRGIPGVKGDRGQIGFPGGRGNPGAPGKPGRSGSPGPKGQKGEKGSVGGSTPLKTVRLVGGSGAHEGRVEIFHQGQWGTICDDRWDIRAGQVVCRSLGYQEVLAVHKRAHFGQGTGPIWLNEVMCFGRESSIENCKINQWGVLSCSHSEDAGVTCTS.

The Cytoplasmic segment spans residues 1–55 (MTKEMTENQRLCPHEQEDADCSSESVKFDARSMTASLPHSTKNGPSLQEKLKSFK). 2 positions are modified to phosphoserine: Ser-32 and Ser-36. The helical; Signal-anchor for type II membrane protein transmembrane segment at 56–78 (AALIALYLLVFAVLIPVVGIVTA) threads the bilayer. The segment at 79-114 (QLLNWEMKNCLVCSLNTSDTSQGPMEKENTSKVEMR) is spacer. The Extracellular portion of the chain corresponds to 79–458 (QLLNWEMKNC…SEDAGVTCTS (380 aa)). Residues Asn-94, Asn-107, Asn-147, Asn-188, Asn-253, and Asn-271 are each glycosylated (N-linked (GlcNAc...) asparagine). The stretch at 209 to 259 (TAKQQEDISKLEERVYKVSAEVQSVKEEQAHVEQEVKQEVRVLNNITNDLR) forms a coiled coil. A disordered region spans residues 272–357 (ITFIQGPPGP…VGGSTPLKTV (86 aa)). The Collagen-like domain occupies 277–350 (GPPGPQGEKG…QKGEKGSVGG (74 aa)). A compositionally biased stretch (gly residues) spans 316 to 325 (GFPGGRGNPG). The segment covering 326–339 (APGKPGRSGSPGPK) has biased composition (low complexity). The 101-residue stretch at 357 to 457 (VRLVGGSGAH…HSEDAGVTCT (101 aa)) folds into the SRCR domain. 3 disulfides stabilise this stretch: Cys-382-Cys-446, Cys-395-Cys-456, and Cys-426-Cys-436.

In terms of assembly, homotrimer. Interacts with MYO18A.

It is found in the membrane. Membrane glycoproteins implicated in the pathologic deposition of cholesterol in arterial walls during atherogenesis. Two types of receptor subunits exist. These receptors mediate the endocytosis of a diverse group of macromolecules, including modified low density lipoproteins (LDL). The sequence is that of Macrophage scavenger receptor types I and II (Msr1) from Mus musculus (Mouse).